We begin with the raw amino-acid sequence, 887 residues long: Pre-mRNA-splicing factor cwf22 (887 aa).

Residues 1–27 (MEKEDKSFGIGMLDYNRENPESSGHSR) form a disordered region. The region spanning 124–307 (KKSINGLINK…EVLFQTRKDK (184 aa)) is the MIF4G domain. The disordered stretch occupies residues 366–401 (ILGEEDDDENEEDEEDSEETSESEEDESVNDEKPQV). A compositionally biased stretch (acidic residues) spans 368–394 (GEEDDDENEEDEEDSEETSESEEDESV). The 117-residue stretch at 411-527 (NLRKSIYLTI…GWEVYDCVRL (117 aa)) folds into the MI domain. Disordered regions lie at residues 607-834 (MPKS…KTYH) and 867-887 (GELY…PRAD). Residues 618-662 (EGYSSGSETGSTYSSSYSSTYSRGRSYSRSTRSYSKSRSYSRSRS) are compositionally biased toward low complexity. Residue Ser-662 is modified to Phosphoserine. A Phosphothreonine modification is found at Thr-664. Residues 677–690 (KDRELSPRGRERSS) are compositionally biased toward basic and acidic residues. The segment covering 691 to 712 (NRNSYSDLSRSSSLSRGRSRSY) has biased composition (low complexity). Residues 717–726 (RLIESEDKGY) show a composition bias toward basic and acidic residues. Residues 736–746 (RKYRSRQRYRR) are compositionally biased toward basic residues. Low complexity-rich tracts occupy residues 747–762 (SYAG…SRSP) and 769–791 (SMSC…SRSP). Over residues 799–809 (DSLSYNRQYSP) the composition is skewed to polar residues.

It belongs to the CWC22 family. In terms of assembly, belongs to the 40S cdc5-associated complex (or cwf complex), a spliceosome sub-complex reminiscent of a late-stage spliceosome composed of the U2, U5 and U6 snRNAs and at least brr2, cdc5, cwf2/prp3, cwf3/syf1, cwf4/syf3, cwf5/ecm2, spp42/cwf6, cwf7/spf27, cwf8, cwf9, cwf10, cwf11, cwf12, prp45/cwf13, cwf14, cwf15, cwf16, cwf17, cwf18, cwf19, cwf20, cwf21, cwf22, cwf23, cwf24, cwf25, cwf26, cyp7/cwf27, cwf28, cwf29/ist3, lea1, msl1, prp5/cwf1, prp10, prp12/sap130, prp17, prp22, sap61, sap62, sap114, sap145, slu7, smb1, smd1, smd3, smf1, smg1 and syf2.

Its subcellular location is the cytoplasm. The protein resides in the nucleus. May be involved in pre-mRNA splicing. In Schizosaccharomyces pombe (strain 972 / ATCC 24843) (Fission yeast), this protein is Pre-mRNA-splicing factor cwf22 (cwf22).